A 378-amino-acid polypeptide reads, in one-letter code: Pre-B-cell leukemia transcription factor 4 (378 aa).

A compositionally biased stretch (pro residues) spans Met-1 to Arg-15. Disordered regions lie at residues Met-1–Gly-24 and Val-100–Asn-125. The PBC domain occupies Pro-22–Asp-214. Residues Asp-29–Gly-107 are PBC-A. Over residues Gly-109 to Gly-120 the composition is skewed to low complexity. The interval Ala-110–Asp-214 is PBC-B. Positions Ala-215–Thr-277 form a DNA-binding region, homeobox; TALE-type. Disordered stretches follow at residues Ala-291–Leu-320 and Arg-355–Asn-378. Low complexity predominate over residues Ala-356–Ser-370.

This sequence belongs to the TALE/PBX homeobox family. In terms of tissue distribution, almost exclusively expressed in testis.

The protein localises to the nucleus. This is Pre-B-cell leukemia transcription factor 4 (Pbx4) from Mus musculus (Mouse).